A 144-amino-acid polypeptide reads, in one-letter code: Large ribosomal subunit protein uL15 (144 aa).

A disordered region spans residues 1 to 49 (MRLNTLSPAAGAKSAAKRVGRGIGSGTGKTCGRGHKGQKSRSGGGVRVG). A compositionally biased stretch (gly residues) spans 21 to 31 (RGIGSGTGKTC).

It belongs to the universal ribosomal protein uL15 family. Part of the 50S ribosomal subunit.

Functionally, binds to the 23S rRNA. The chain is Large ribosomal subunit protein uL15 from Shewanella halifaxensis (strain HAW-EB4).